Here is a 180-residue protein sequence, read N- to C-terminus: NADH-quinone oxidoreductase subunit I (180 aa).

2 consecutive 4Fe-4S ferredoxin-type domains span residues 44–74 (LNRYPDGLEKCIGCELCAWACPADAIYVEGA) and 90–119 (RVYQINYLRCIGCGLCIEACPTRALTMTTE). [4Fe-4S] cluster is bound by residues C54, C57, C60, C64, C99, C102, C105, and C109. The interval 145 to 180 (MQAPPHDMAPGKTDDDYYLGNVTPITPVPSGTEDAR) is disordered.

It belongs to the complex I 23 kDa subunit family. In terms of assembly, NDH-1 is composed of 14 different subunits. Subunits NuoA, H, J, K, L, M, N constitute the membrane sector of the complex. It depends on [4Fe-4S] cluster as a cofactor.

Its subcellular location is the cell membrane. The enzyme catalyses a quinone + NADH + 5 H(+)(in) = a quinol + NAD(+) + 4 H(+)(out). Functionally, NDH-1 shuttles electrons from NADH, via FMN and iron-sulfur (Fe-S) centers, to quinones in the respiratory chain. The immediate electron acceptor for the enzyme in this species is believed to be menaquinone. Couples the redox reaction to proton translocation (for every two electrons transferred, four hydrogen ions are translocated across the cytoplasmic membrane), and thus conserves the redox energy in a proton gradient. In Mycolicibacterium smegmatis (strain ATCC 700084 / mc(2)155) (Mycobacterium smegmatis), this protein is NADH-quinone oxidoreductase subunit I.